We begin with the raw amino-acid sequence, 793 residues long: uncharacterized protein (793 aa).

The first 21 residues, 1 to 21 (MLKKTLLAYTIGFAFSPPANA), serve as a signal peptide directing secretion. The cysteines at positions 769 and 792 are disulfide-linked.

This sequence belongs to the fimbrial export usher family.

It is found in the cell outer membrane. In terms of biological role, involved in the export and assembly of a fimbrial subunit across the outer membrane. This is an uncharacterized protein from Escherichia coli (strain K12).